The chain runs to 147 residues: Hemoglobin subunit beta (147 aa).

N-acetylvaline is present on Val2. The Globin domain occupies 3–147 (HLTGEEKSAV…VANALAHKYH (145 aa)). Thr13 is subject to Phosphothreonine. The residue at position 45 (Ser45) is a Phosphoserine. An N6-acetyllysine modification is found at Lys60. His64 contributes to the heme b binding site. Lys83 carries the post-translational modification N6-acetyllysine. His93 contributes to the heme b binding site. Cys94 is subject to S-nitrosocysteine. An N6-acetyllysine modification is found at Lys145.

The protein belongs to the globin family. In terms of assembly, heterotetramer of two alpha chains and two beta chains. Red blood cells.

Its function is as follows. Involved in oxygen transport from the lung to the various peripheral tissues. The sequence is that of Hemoglobin subunit beta (HBB) from Callithrix jacchus (White-tufted-ear marmoset).